The chain runs to 607 residues: MGKKRVMVPAKDVDLSSIKYEPEIVQAPHLTGFWFRFFVRLIEAPLIGPFLLTMLKKENKIDQLLRNTVFPEEPMFKPEYPPQEKEHSVVELDEDGRPEGRVESALNCLPHYDPAKLWENSSATFRYWKIRDYAYAYQSRKVTPSMVAESIISMIEENGIDKPPTPLLLSFDAAEVRKQAAASTQRFESGNPLSILDGIFIAIKDDIDCHPHPSTGGSTWMHEVRDVKKDAVCVSRLRSCGVIFIGKTNMHEFGMGTTGNNSNYGTARNPHAPDRYTGGSSSGPAAIVASGLCSAALGTDGGGSVRIPSSLCGVVGLKINYGRTSMEGSLCDSGTVEVIGPIASTVEDAMLVYAAMLGASPANRISMKPSTPCLPTLSSDDDTDALRSLRIGIYTPWFNNVHSTEVSDKCEDALNLLSKAHGCEVVEVVIPEIVEMRTAHLVSIGSECLSSLNPDIEDGKGVKLSYDTRTSLALFQSFTAADYVAAQCIRRRIMHYFMEIFKKVDVIVTPTTGMTAPRIPPSALKSGETDMPTTGYLMRFVVPANLLGLPAISVPVGYDKEGLPIGLQVIGRPWAEATILRVAAAVEKLCGESKRRPVTYYDVLGAN.

Residues lysine 204 and serine 280 each act as charge relay system in the active site. 301 to 304 (GGGS) contributes to the substrate binding site. Serine 304 functions as the Acyl-ester intermediate in the catalytic mechanism.

Belongs to the amidase family. Forms homodimers.

The protein localises to the endoplasmic reticulum membrane. Its subcellular location is the cell membrane. The catalysed reaction is N-(9Z,12Z-octadecadienoyl)-ethanolamine + H2O = ethanolamine + (9Z,12Z)-octadecadienoate. Functionally, catalyzes the hydrolysis of bioactive endogenous fatty acid amides to their corresponding acids. The hydrolysis of endogenous amidated lipids terminates their participation as lipid mediators in various signaling systems. Converts a wide range of N-acylethanolamines (NAEs) to their corresponding free fatty acids and ethanolamine. The sequence is that of Fatty acid amide hydrolase from Medicago truncatula (Barrel medic).